The chain runs to 337 residues: UbiA prenyltransferase domain-containing protein 1 (337 aa).

A2 is modified (N-acetylalanine). The next 8 helical transmembrane spans lie at 82–102, 133–153, 159–179, 187–207, 208–228, 244–266, 276–296, and 314–334; these read LLVGCAVAVLAVHGAGNLVNT, FGVFLYTLGCVCAACLYCLSP, LALIYFGGLSGSFLYTGGIGF, LVILITFGPLAVMFAYAVQVG, SLAVFPLVYAIPLALSTEAVL, IVTLAILIGPTLSYVLYNTLLFL, THCSISLALPLLTVPMAFSLE, and LNLLLGLFYVFGIILAPAGSL.

This sequence belongs to the UbiA prenyltransferase family. Interacts with HMGCR and SOAT1.

It is found in the endoplasmic reticulum membrane. It localises to the golgi apparatus membrane. Its subcellular location is the mitochondrion membrane. The catalysed reaction is menadiol + (2E,6E,10E)-geranylgeranyl diphosphate = menaquinol-4 + diphosphate. It catalyses the reaction all-trans-decaprenyl diphosphate + 4-hydroxybenzoate = 4-hydroxy-3-(all-trans-decaprenyl)benzoate + diphosphate. It participates in quinol/quinone metabolism; menaquinone biosynthesis. Its pathway is cofactor biosynthesis; ubiquinone biosynthesis. In terms of biological role, prenyltransferase that mediates the formation of menaquinone-4 (MK-4) and coenzyme Q10. MK-4 is a vitamin K2 isoform required for endothelial cell development. Mediates the conversion of phylloquinone (PK) into MK-4, probably by cleaving the side chain of phylloquinone (PK) to release 2-methyl-1,4-naphthoquinone (menadione; K3) and then prenylating it with geranylgeranyl pyrophosphate (GGPP) to form MK-4. Also plays a role in cardiovascular development independently of MK-4 biosynthesis, by acting as a coenzyme Q10 biosynthetic enzyme: coenzyme Q10, also named ubiquinone, plays an important antioxidant role in the cardiovascular system. Mediates biosynthesis of coenzyme Q10 in the Golgi membrane, leading to protect cardiovascular tissues from NOS3/eNOS-dependent oxidative stress. The chain is UbiA prenyltransferase domain-containing protein 1 (UBIAD1) from Ailuropoda melanoleuca (Giant panda).